Here is a 281-residue protein sequence, read N- to C-terminus: Pantothenate synthetase (281 aa).

Position 30-37 (30-37 (MGNLHQGH)) interacts with ATP. The active-site Proton donor is the H37. (R)-pantoate is bound at residue Q61. A beta-alanine-binding site is contributed by Q61. ATP is bound at residue 149–152 (GNKD). Q155 serves as a coordination point for (R)-pantoate. Residues I178 and 186-189 (MSSR) contribute to the ATP site.

It belongs to the pantothenate synthetase family. As to quaternary structure, homodimer.

It localises to the cytoplasm. The catalysed reaction is (R)-pantoate + beta-alanine + ATP = (R)-pantothenate + AMP + diphosphate + H(+). The protein operates within cofactor biosynthesis; (R)-pantothenate biosynthesis; (R)-pantothenate from (R)-pantoate and beta-alanine: step 1/1. Catalyzes the condensation of pantoate with beta-alanine in an ATP-dependent reaction via a pantoyl-adenylate intermediate. In Shewanella baltica (strain OS195), this protein is Pantothenate synthetase.